Reading from the N-terminus, the 161-residue chain is 3-hydroxyacyl-[acyl-carrier-protein] dehydratase FabZ (161 aa).

The active site involves H64.

The protein belongs to the thioester dehydratase family. FabZ subfamily.

The protein localises to the cytoplasm. It catalyses the reaction a (3R)-hydroxyacyl-[ACP] = a (2E)-enoyl-[ACP] + H2O. Functionally, involved in unsaturated fatty acids biosynthesis. Catalyzes the dehydration of short chain beta-hydroxyacyl-ACPs and long chain saturated and unsaturated beta-hydroxyacyl-ACPs. The polypeptide is 3-hydroxyacyl-[acyl-carrier-protein] dehydratase FabZ (Paramagnetospirillum magneticum (strain ATCC 700264 / AMB-1) (Magnetospirillum magneticum)).